A 299-amino-acid chain; its full sequence is Tyrosine recombinase XerC (299 aa).

One can recognise a Core-binding (CB) domain in the interval 1–85 (MKRQLEAYCA…AVRGLYRYLN (85 aa)). In terms of domain architecture, Tyr recombinase spans 106–285 (RLPKVLDTDR…DFQHLAAVYD (180 aa)). Catalysis depends on residues R146, K170, H237, R240, and H263. The O-(3'-phospho-DNA)-tyrosine intermediate role is filled by Y272.

It belongs to the 'phage' integrase family. XerC subfamily. Forms a cyclic heterotetrameric complex composed of two molecules of XerC and two molecules of XerD.

It localises to the cytoplasm. In terms of biological role, site-specific tyrosine recombinase, which acts by catalyzing the cutting and rejoining of the recombining DNA molecules. The XerC-XerD complex is essential to convert dimers of the bacterial chromosome into monomers to permit their segregation at cell division. It also contributes to the segregational stability of plasmids. In Pseudomonas putida (strain ATCC 47054 / DSM 6125 / CFBP 8728 / NCIMB 11950 / KT2440), this protein is Tyrosine recombinase XerC.